A 411-amino-acid chain; its full sequence is Transforming growth factor beta regulator 1 (411 aa).

2 disordered regions span residues 1–29 (MSLL…PKKS) and 119–146 (GPIS…KGKE). N-acetylserine is present on serine 2. The residue at position 10 (serine 10) is a Phosphoserine. An FYR N-terminal domain is found at 182-241 (VFPIGLGGLTVYSLGEIITDRPGFHDESAIYPVGYCSTRIYASMKCPDQKCLYTCQIKDG). Residues 242-321 (GVQPQFEIVP…RKCINYQWVK (80 aa)) enclose the FYR C-terminal domain.

Belongs to the TBRG1 family. In terms of assembly, interacts with CDKN2A and MDM2. Ubiquitinated; mediated by MDM2 and leading to its subsequent proteasomal degradation. Widely expressed at low levels in most tissues, with highest levels in pancreas, lung and liver. Expression is decreased in primary tumors including lung, liver, breast, pancreas and kidney carcinomas, chronic lymphocytic leukemia and diffuse large B-cell lymphoma.

The protein localises to the nucleus. Acts as a growth inhibitor. Can activate p53/TP53, causes G1 arrest and collaborates with CDKN2A to restrict proliferation, but does not require either protein to inhibit DNA synthesis. Redistributes CDKN2A into the nucleoplasm. Involved in maintaining chromosomal stability. The chain is Transforming growth factor beta regulator 1 (TBRG1) from Homo sapiens (Human).